The following is a 368-amino-acid chain: MTVKLTIDCMGGDHGPSVTVPAAVNFARSHPDAQLLLVGIESAIRAQLKKLKAQDLPALTVVPASEIVAMDDPVEVALRKKKDSSMRVALNRVKEGEAQACISAGNTGALMAVSRYVLKTLSGIERPAIASALPNPNGYTMMLDLGANVDCEPQHLLQFAEMGHALVSALEGKERPTIGLLNIGEEVIKGNDTIKRAGELLRASTLNFHGNVEGNDIFKGTVDVIVCDGFVGNVALKTSEGLAQMLSNIIKEEFGRSLLTKVMAVLALPVLMRFKKRVDHRQYNGAALLGLRGLVIKSHGSADAYGFEWAIKRGYDAVKNGVLERLARAMEENEGSLEQAARDASGAGHASPIAGQPAEPYAAQSSKA.

The tract at residues 334 to 368 (EGSLEQAARDASGAGHASPIAGQPAEPYAAQSSKA) is disordered.

Belongs to the PlsX family. In terms of assembly, homodimer. Probably interacts with PlsY.

It localises to the cytoplasm. The enzyme catalyses a fatty acyl-[ACP] + phosphate = an acyl phosphate + holo-[ACP]. It participates in lipid metabolism; phospholipid metabolism. Catalyzes the reversible formation of acyl-phosphate (acyl-PO(4)) from acyl-[acyl-carrier-protein] (acyl-ACP). This enzyme utilizes acyl-ACP as fatty acyl donor, but not acyl-CoA. The polypeptide is Phosphate acyltransferase (Paraburkholderia xenovorans (strain LB400)).